A 364-amino-acid chain; its full sequence is 4-hydroxy-3-methylbut-2-en-1-yl diphosphate synthase (flavodoxin) (364 aa).

Residues cysteine 268, cysteine 271, cysteine 303, and glutamate 310 each coordinate [4Fe-4S] cluster.

The protein belongs to the IspG family. Requires [4Fe-4S] cluster as cofactor.

It carries out the reaction (2E)-4-hydroxy-3-methylbut-2-enyl diphosphate + oxidized [flavodoxin] + H2O + 2 H(+) = 2-C-methyl-D-erythritol 2,4-cyclic diphosphate + reduced [flavodoxin]. It functions in the pathway isoprenoid biosynthesis; isopentenyl diphosphate biosynthesis via DXP pathway; isopentenyl diphosphate from 1-deoxy-D-xylulose 5-phosphate: step 5/6. Functionally, converts 2C-methyl-D-erythritol 2,4-cyclodiphosphate (ME-2,4cPP) into 1-hydroxy-2-methyl-2-(E)-butenyl 4-diphosphate. This Anoxybacillus flavithermus (strain DSM 21510 / WK1) protein is 4-hydroxy-3-methylbut-2-en-1-yl diphosphate synthase (flavodoxin).